The primary structure comprises 534 residues: Ankyrin repeat domain-containing protein 34C (534 aa).

ANK repeat units follow at residues Thr-10–Glu-39, Lys-43–Ile-80, Ser-84–Leu-114, and Thr-118–Lys-147. Residues Ser-159–Lys-205 are disordered. Ser-301 bears the Phosphoserine mark. Disordered regions lie at residues Tyr-332 to Pro-368 and Gln-384 to Asp-403. Ser-446 bears the Phosphoserine mark. The tract at residues Ser-480–Arg-503 is disordered.

It belongs to the ANKRD34 family.

The sequence is that of Ankyrin repeat domain-containing protein 34C (Ankrd34c) from Mus musculus (Mouse).